The chain runs to 171 residues: Large ribosomal subunit protein bL17 (171 aa).

Residues 140 to 152 are compositionally biased toward basic and acidic residues; that stretch reads KREIQTKAREEKR. Residues 140 to 171 are disordered; the sequence is KREIQTKAREEKRATRKSNSAPVSKETTSKKK. The span at 156 to 165 shows a compositional bias: polar residues; it reads KSNSAPVSKE.

Belongs to the bacterial ribosomal protein bL17 family. Part of the 50S ribosomal subunit. Contacts protein L32.

The polypeptide is Large ribosomal subunit protein bL17 (Leptospira interrogans serogroup Icterohaemorrhagiae serovar copenhageni (strain Fiocruz L1-130)).